Here is a 351-residue protein sequence, read N- to C-terminus: Small ribosomal subunit protein uS2 (351 aa).

The segment at Gln-302–Asn-351 is disordered. The segment covering Thr-340–Asn-351 has biased composition (basic and acidic residues).

The protein belongs to the universal ribosomal protein uS2 family.

The chain is Small ribosomal subunit protein uS2 from Ureaplasma urealyticum serovar 10 (strain ATCC 33699 / Western).